The following is an 875-amino-acid chain: ATP-dependent helicase Lhr-Core (875 aa).

ATP-binding residues include glutamine 35, lysine 58, threonine 59, aspartate 173, glutamate 174, isoleucine 355, arginine 372, and histidine 375. Residues isoleucine 39–arginine 230 enclose the Helicase ATP-binding domain. The DEIH box signature appears at aspartate 173–histidine 176. The region spanning proline 247–aspartate 419 is the Helicase C-terminal domain. Residues valine 420–proline 506 are WH domain. The interval aspartate 507–valine 875 is domain 4.

The protein belongs to the Lhr helicase family. Lhr-Core subfamily. Monomer and homodimer. The monomeric form has helicase, ATPase and strand annealing activities, while the dimeric form only has ATPAse and strand annealing activities. Interacts with DNA topoisomerase 3 (topA).

It carries out the reaction Couples ATP hydrolysis with the unwinding of duplex DNA by translocating in the 3'-5' direction.. The enzyme catalyses ATP + H2O = ADP + phosphate + H(+). DNA topoisomerase 3 (topA) inhibits helicase activity on Holliday junctions (HJ) but has no effect on ATPase activity. Functionally, DNA helicase that translocates in a 3'-5' direction on single-stranded (ss)DNA, probably involved in DNA repair. Unwinds DNA in a 3'-5' direction, unwinding is ATP-dependent, acts preferentially on fork and 3'-tailed DNA; bubble and blunt-ended double-stranded (ds)DNA are not substrates. Has winding and unwinding activity, unwinds Holliday junction (HJ) DNA in the presence of ATP, the main product is forked DNA, single-stranded binding protein (SSB) does not stimulate activity. Anneals complementary oligonucleotides in an ATP-independent manner to form HJ and fork structures, thus can perform strand exchange. Preferentially binds HJ, forked and ssDNA, dsDNA is bound less well. LhrC-Core (Hel112) inhibits the exonuclease activity of the HerA-NurA complex on ss- and dsDNA, has no effect on ssDNA nicking by NurA; HerA-NurA are involved in DNA end-resection during DNA double-strand break repair. The chain is ATP-dependent helicase Lhr-Core from Saccharolobus solfataricus (strain ATCC 35092 / DSM 1617 / JCM 11322 / P2) (Sulfolobus solfataricus).